Reading from the N-terminus, the 123-residue chain is Large ribosomal subunit protein bL19c (123 aa).

Belongs to the bacterial ribosomal protein bL19 family.

The protein localises to the plastid. The protein resides in the chloroplast. The chain is Large ribosomal subunit protein bL19c from Pyropia yezoensis (Susabi-nori).